Consider the following 664-residue polypeptide: Alcohol oxidase (664 aa).

8–39 (DIIVVGGGSTGCCIAGRLANLDDQNLTVALIE) contacts FAD. Catalysis depends on H568, which acts as the Proton acceptor. Residues 662 to 664 (ARF) carry the Microbody targeting signal motif.

This sequence belongs to the GMC oxidoreductase family. In terms of assembly, homooctamer. FAD serves as cofactor.

The protein resides in the peroxisome matrix. It carries out the reaction a primary alcohol + O2 = an aldehyde + H2O2. It functions in the pathway energy metabolism; methane degradation. In terms of biological role, catalyzes the oxidation of methanol to formaldehyde and hydrogen peroxide, the first step in the methanol utilization pathway of methylotrophic yeasts. This chain is Alcohol oxidase (MOX), found in Pichia angusta (Yeast).